A 400-amino-acid polypeptide reads, in one-letter code: Subtilisin-like protease CPC735_013700 (400 aa).

A signal peptide spans 1 to 19 (MGFVKILSLSLAATAVADA). Residues 20–116 (ATILSPRYPN…IEPNQIVTIS (97 aa)) constitute a propeptide that is removed on maturation. The 80-residue stretch at 36–115 (YIVVMKDGVS…FIEPNQIVTI (80 aa)) folds into the Inhibitor I9 domain. One can recognise a Peptidase S8 domain in the interval 126–400 (SWGLPRISVK…RKLLYNNSGK (275 aa)). Catalysis depends on charge relay system residues aspartate 161 and histidine 192. N-linked (GlcNAc...) asparagine glycosylation is present at asparagine 252. Serine 346 acts as the Charge relay system in catalysis. Asparagine 396 carries N-linked (GlcNAc...) asparagine glycosylation.

The protein belongs to the peptidase S8 family.

It localises to the secreted. Its function is as follows. Secreted subtilisin-like serine protease with keratinolytic activity that contributes to pathogenicity. This Coccidioides posadasii (strain C735) (Valley fever fungus) protein is Subtilisin-like protease CPC735_013700.